The chain runs to 221 residues: Late embryogenesis abundant protein, group 3 (221 aa).

A disordered region spans residues 1-221 (MASHQDKASY…KDSSTITRDH (221 aa)). Over residues 33 to 42 (TAQHAKDRAA) the composition is skewed to basic and acidic residues. Positions 43–52 (DAAGHAAGKG) are enriched in low complexity. Composition is skewed to basic and acidic residues over residues 53–63 (QDAKEATKQKA) and 72–147 (KKTD…KQKA). The segment covering 212 to 221 (KDSSTITRDH) has biased composition (polar residues).

This sequence belongs to the LEA type 4 family.

This is Late embryogenesis abundant protein, group 3 (MGL3) from Zea mays (Maize).